Consider the following 373-residue polypeptide: LIM domain-binding protein 2 (373 aa).

2 disordered regions span residues 244-287 and 327-373; these read APPA…KTPA and QYDA…QASQ. Residues 263–280 show a composition bias toward low complexity; it reads STSSTSNSSAGNTTNSAG. An LIM interaction domain (LID) domain is found at 298-337; sequence DVMVVGEPTLMGGEFGDEDERLITRLENTQYDAANGMDDE. Polar residues predominate over residues 341–373; that stretch reads NNSPALGNNSPWNSKPPATQETKSENAPPQASQ.

This sequence belongs to the LDB family. Interacts with LHX9. Interacts with SLK; leading to negatively regulate SLK kinase activity. Interacts with LMO4. In terms of assembly, interacts with PITX1. Interacts with LHX3. Ubiquitinated by RLIM/RNF12, leading to its degradation by the proteasome. In terms of tissue distribution, expressed in multiple tissues including heart, brain, liver, kidney, testis, lung and muscle, with expression highest in the brain, trigeminal ganglia, and lung.

It is found in the nucleus. Transcription cofactor. Binds to the LIM domain of a wide variety of LIM domain-containing transcription factors. Functionally, regulates the transcriptional activity of LIM-containing proteins such as LHX3 or PITX1. This Mus musculus (Mouse) protein is LIM domain-binding protein 2 (Ldb2).